A 315-amino-acid polypeptide reads, in one-letter code: MASFASLVKKELTQLEVHPEHAKAELSALIRMNGSLTLMAHRFVLNIQTENPAIARRIYSLIRQVYHHEANLVVHRKMKLKKNYQYIVRLTEGVNDILSDLSILDPDTMAISTTVPTSVLKEPQRMRSYLRGAFLASGSVNNPETSRYHLEIYSLYDNHNAGILKMMNHFHLNARTVERRSGYIVYLKEAEKIADFLQVIGATNAMLKFEDVRIMRDMRNSVNRLVNCENANMNKTIDAAQKQIENINYLKNHVGLDNLPAKLREIAVLRLAHPDVSLQELGAMMPSGQISKSGVNHRLRKLNQIAEGYQQPEDA.

The segment at residues 277-311 is a DNA-binding region (H-T-H motif); the sequence is SLQELGAMMPSGQISKSGVNHRLRKLNQIAEGYQQ.

Belongs to the WhiA family.

Involved in cell division and chromosome segregation. The sequence is that of Probable cell division protein WhiA from Lacticaseibacillus casei (strain BL23) (Lactobacillus casei).